A 365-amino-acid chain; its full sequence is Flagellar P-ring protein (365 aa).

The first 19 residues, 1-19 (MIKFLSALILLLVTTAAQA), serve as a signal peptide directing secretion.

The protein belongs to the FlgI family. As to quaternary structure, the basal body constitutes a major portion of the flagellar organelle and consists of four rings (L,P,S, and M) mounted on a central rod.

It is found in the periplasm. The protein localises to the bacterial flagellum basal body. In terms of biological role, assembles around the rod to form the L-ring and probably protects the motor/basal body from shearing forces during rotation. The sequence is that of Flagellar P-ring protein from Escherichia coli O9:H4 (strain HS).